Reading from the N-terminus, the 709-residue chain is ATP-dependent zinc metalloprotease FtsH (709 aa).

Residues 1 to 25 (MKKNKGLNEATTSEKPQFPKRTAWK) are Cytoplasmic-facing. A helical transmembrane segment spans residues 26–46 (IFWWVVILAIIIGILVYILMP). Over 47-171 (RATTAVIEKW…FVAPDTRARD (125 aa)) the chain is Extracellular. A helical membrane pass occupies residues 172-192 (VLNIFFGLLPIIIFVIFFLLF). The Cytoplasmic segment spans residues 193–709 (WRSARGISGG…DTEKDSETNS (517 aa)). 268-275 (GPPGTGKT) contributes to the ATP binding site. Histidine 490 provides a ligand contact to Zn(2+). Residue glutamate 491 is part of the active site. Histidine 494 and aspartate 569 together coordinate Zn(2+). The segment at 673-709 (ILAQKQEQQAKQKAEAKEAKLNKKTEKDTEKDSETNS) is disordered. Basic and acidic residues predominate over residues 680–709 (QQAKQKAEAKEAKLNKKTEKDTEKDSETNS).

It in the central section; belongs to the AAA ATPase family. This sequence in the C-terminal section; belongs to the peptidase M41 family. As to quaternary structure, homohexamer. Requires Zn(2+) as cofactor.

The protein resides in the cell membrane. Functionally, acts as a processive, ATP-dependent zinc metallopeptidase for both cytoplasmic and membrane proteins. Plays a role in the quality control of integral membrane proteins. This chain is ATP-dependent zinc metalloprotease FtsH, found in Mycoplasma pneumoniae (strain ATCC 29342 / M129 / Subtype 1) (Mycoplasmoides pneumoniae).